The sequence spans 191 residues: Holliday junction branch migration complex subunit RuvA (191 aa).

The tract at residues Met1–Ala64 is domain I. The segment at Thr65 to His140 is domain II. The interval His140–Pro142 is flexible linker. Residues Ala143 to Lys191 form a domain III region.

It belongs to the RuvA family. Homotetramer. Forms an RuvA(8)-RuvB(12)-Holliday junction (HJ) complex. HJ DNA is sandwiched between 2 RuvA tetramers; dsDNA enters through RuvA and exits via RuvB. An RuvB hexamer assembles on each DNA strand where it exits the tetramer. Each RuvB hexamer is contacted by two RuvA subunits (via domain III) on 2 adjacent RuvB subunits; this complex drives branch migration. In the full resolvosome a probable DNA-RuvA(4)-RuvB(12)-RuvC(2) complex forms which resolves the HJ.

It localises to the cytoplasm. Functionally, the RuvA-RuvB-RuvC complex processes Holliday junction (HJ) DNA during genetic recombination and DNA repair, while the RuvA-RuvB complex plays an important role in the rescue of blocked DNA replication forks via replication fork reversal (RFR). RuvA specifically binds to HJ cruciform DNA, conferring on it an open structure. The RuvB hexamer acts as an ATP-dependent pump, pulling dsDNA into and through the RuvAB complex. HJ branch migration allows RuvC to scan DNA until it finds its consensus sequence, where it cleaves and resolves the cruciform DNA. This chain is Holliday junction branch migration complex subunit RuvA, found in Verminephrobacter eiseniae (strain EF01-2).